We begin with the raw amino-acid sequence, 143 residues long: Transcriptional regulator SlyA (143 aa).

The region spanning 2-135 (ESTLGSDLSR…LTNLVERLEQ (134 aa)) is the HTH marR-type domain. Residues 49–72 (QIQLAKAIGIEQPSLVRTLDQLED) constitute a DNA-binding region (H-T-H motif).

The protein belongs to the SlyA family. In terms of assembly, homodimer.

Its function is as follows. Transcription regulator that can specifically activate or repress expression of target genes. The chain is Transcriptional regulator SlyA from Edwardsiella tarda.